The sequence spans 564 residues: Putative zinc metalloproteinase in scaA 5'region (564 aa).

The Peptidase M13 domain occupies 1 to 564 (MTRLQDDFYD…KEADFSAEEF (564 aa)). Histidine 478 provides a ligand contact to Zn(2+). Glutamate 479 is an active-site residue. Residues histidine 482 and glutamate 538 each contribute to the Zn(2+) site. Residue aspartate 542 is the Proton donor of the active site.

It belongs to the peptidase M13 family. The cofactor is Zn(2+).

This Streptococcus gordonii (strain Challis / ATCC 35105 / BCRC 15272 / CH1 / DL1 / V288) protein is Putative zinc metalloproteinase in scaA 5'region.